We begin with the raw amino-acid sequence, 315 residues long: Peroxidase 4 (315 aa).

The signal sequence occupies residues 1-19; that stretch reads MAIFKILVLLLSLCCFSQA. Residue glutamine 20 is modified to Pyrrolidone carboxylic acid. 4 disulfide bridges follow: cysteine 30-cysteine 110, cysteine 63-cysteine 68, cysteine 116-cysteine 311, and cysteine 195-cysteine 221. Histidine 61 (proton acceptor) is an active-site residue. 5 residues coordinate Ca(2+): aspartate 62, valine 65, glycine 67, aspartate 69, and serine 71. Proline 158 is a substrate binding site. Position 188 (histidine 188) interacts with heme b. Threonine 189 is a binding site for Ca(2+). A glycan (N-linked (GlcNAc...) asparagine) is linked at asparagine 205. Aspartate 234, threonine 237, and aspartate 242 together coordinate Ca(2+).

The protein belongs to the peroxidase family. Classical plant (class III) peroxidase subfamily. Heme b serves as cofactor. The cofactor is Ca(2+).

The protein resides in the secreted. The enzyme catalyses 2 a phenolic donor + H2O2 = 2 a phenolic radical donor + 2 H2O. Its function is as follows. Removal of H(2)O(2), oxidation of toxic reductants, biosynthesis and degradation of lignin, suberization, auxin catabolism, response to environmental stresses such as wounding, pathogen attack and oxidative stress. These functions might be dependent on each isozyme/isoform in each plant tissue. In Arabidopsis thaliana (Mouse-ear cress), this protein is Peroxidase 4 (PER4).